Reading from the N-terminus, the 237-residue chain is 4-hydroxy-tetrahydrodipicolinate reductase (237 aa).

Residues 11–16 (GASGRM), 92–94 (GTT), and 116–119 (GSNF) each bind NAD(+). Catalysis depends on His148, which acts as the Proton donor/acceptor. Residue His149 participates in (S)-2,3,4,5-tetrahydrodipicolinate binding. Lys152 (proton donor) is an active-site residue. 158–159 (GS) contacts (S)-2,3,4,5-tetrahydrodipicolinate.

This sequence belongs to the DapB family.

Its subcellular location is the cytoplasm. The enzyme catalyses (S)-2,3,4,5-tetrahydrodipicolinate + NAD(+) + H2O = (2S,4S)-4-hydroxy-2,3,4,5-tetrahydrodipicolinate + NADH + H(+). It carries out the reaction (S)-2,3,4,5-tetrahydrodipicolinate + NADP(+) + H2O = (2S,4S)-4-hydroxy-2,3,4,5-tetrahydrodipicolinate + NADPH + H(+). It functions in the pathway amino-acid biosynthesis; L-lysine biosynthesis via DAP pathway; (S)-tetrahydrodipicolinate from L-aspartate: step 4/4. Catalyzes the conversion of 4-hydroxy-tetrahydrodipicolinate (HTPA) to tetrahydrodipicolinate. This Xylella fastidiosa (strain 9a5c) protein is 4-hydroxy-tetrahydrodipicolinate reductase.